The following is a 213-amino-acid chain: ATP-dependent dethiobiotin synthetase BioD (213 aa).

12-17 (EVGKTY) provides a ligand contact to ATP. Mg(2+) is bound at residue T16. Residue K37 is part of the active site. ATP is bound by residues D46, 107-110 (EGVG), and 167-168 (NN). Positions 46 and 107 each coordinate Mg(2+).

The protein belongs to the dethiobiotin synthetase family. Homodimer. Mg(2+) is required as a cofactor.

It is found in the cytoplasm. It carries out the reaction (7R,8S)-7,8-diammoniononanoate + CO2 + ATP = (4R,5S)-dethiobiotin + ADP + phosphate + 3 H(+). It functions in the pathway cofactor biosynthesis; biotin biosynthesis; biotin from 7,8-diaminononanoate: step 1/2. Functionally, catalyzes a mechanistically unusual reaction, the ATP-dependent insertion of CO2 between the N7 and N8 nitrogen atoms of 7,8-diaminopelargonic acid (DAPA, also called 7,8-diammoniononanoate) to form a ureido ring. The chain is ATP-dependent dethiobiotin synthetase BioD from Akkermansia muciniphila (strain ATCC BAA-835 / DSM 22959 / JCM 33894 / BCRC 81048 / CCUG 64013 / CIP 107961 / Muc).